An 820-amino-acid chain; its full sequence is Sodium/hydrogen exchanger 1 (820 aa).

At M1–H102 the chain is on the extracellular side. A disordered region spans residues A44 to H71. Residues V103 to V125 form a helical membrane-spanning segment. Residues I126 to P134 lie on the Cytoplasmic side of the membrane. The helical transmembrane segment at E135–G152 threads the bilayer. The Extracellular segment spans residues V153–S162. Residues D163–F180 traverse the membrane as a helical segment. The Cytoplasmic segment spans residues L181–L190. A helical membrane pass occupies residues G191–G219. At G220–I226 the chain is on the extracellular side. The chain crosses the membrane as a helical span at residues G227 to I253. Over H254–N256 the chain is Cytoplasmic. A helical membrane pass occupies residues E257–Y287. The Extracellular segment spans residues E288–G291. Residues I292–F326 form a helical membrane-spanning segment. Residues T327 to V332 lie on the Cytoplasmic side of the membrane. A helical membrane pass occupies residues I333–A345. The Extracellular portion of the chain corresponds to Y346–L354. The chain crosses the membrane as a helical span at residues S355–I375. At S376 to H377 the chain is on the cytoplasmic side. A helical transmembrane segment spans residues K378 to A408. At G409–N414 the chain is on the extracellular side. Residues W415–K442 form a helical membrane-spanning segment. Over F443–L448 the chain is Cytoplasmic. The chain crosses the membrane as a helical span at residues T449–L473. Residues D474–P479 are Extracellular-facing. The chain crosses the membrane as a helical span at residues M480–L509. The segment at P505–R571 is interaction with TESC. The Cytoplasmic portion of the chain corresponds to L510 to Q820. Positions K513–R520 are PI(4,5)P2-binding region. The interval K519–H549 is interaction with CHP2. Positions H544–H549 are confers pH-dependent PI(4,5)P2 binding. The segment at R556–K564 is PI(4,5)P2-binding region. A phosphoserine mark is found at S603 and S606. T607 is subject to Phosphothreonine. Phosphoserine is present on residues S609 and S652. The segment at K637–Q820 is interaction with TESC. The interaction with CALM1 stretch occupies residues K637 to Q820. The interval L688 to P691 is interaction with PPP3CA. Phosphoserine occurs at positions 697, 701, and 707. Residues P719 to D724 form an interaction with PPP3CA region. Phosphoserine occurs at positions 727, 730, and 733. Positions G747 to Q820 are disordered. T755 and T784 each carry phosphothreonine. Residues S790 and S801 each carry the phosphoserine modification.

The protein belongs to the monovalent cation:proton antiporter 1 (CPA1) transporter (TC 2.A.36) family. Homodimer; dimerization is crucial for its function. Oligomer. Interacts with CALM1 in a calcium-dependent manner. Interacts with TESC. Interacts (via residues 504-563) with CHP1. The interaction with CHP1 occurs at the plasma membrane in a calcium-dependent manner. Interacts with CHP2. The interaction with CHP2 occurs in a calcium-dependent manner. Interacts with EZR; regulates the cytoskeletal interactions of SLC9A1 and promotes stress fiber formation. In terms of processing, N-glycosylated and O-glycosylated in the N-terminal region. Ubiquitinated, leading to its degradation by the proteasome. Ubiquitination is reduced by CHP1. Post-translationally, palmitoylated; may play a major role in SLC9A1 regulation. In terms of processing, phosphorylation at Thr-784 increases SLC9A1 activity; specifically dephosphorylated by PPP3CA. Specifically dephosphorylated at Thr-784 by PPP3CA that negatively regulates SLC9A1 activity. Phosphorylation at Ser-652 by AKT1 reduces SLC9A1 binding to CALM1. As to expression, widely expressed.

The protein resides in the cell membrane. It is found in the basolateral cell membrane. It catalyses the reaction Na(+)(in) + H(+)(out) = Na(+)(out) + H(+)(in). It carries out the reaction Li(+)(out) + H(+)(in) = Li(+)(in) + H(+)(out). The catalysed reaction is Li(+)(in) + Na(+)(out) = Li(+)(out) + Na(+)(in). Activated at acidic pHs. Inhibited by cariporide and eniporide. Inhibited by amiloride and 5-amino-substituted derivatives. Phosphatidylinositol 4,5-bisphosphate (PI(4,5)P2) bind and activates SLC9A1 transporter activity. In terms of biological role, electroneutral Na(+) /H(+) antiporter that extrudes Na(+) in exchange for external protons driven by the inward sodium ion chemical gradient, protecting cells from acidification that occurs from metabolism. Exchanges intracellular H(+) ions for extracellular Na(+) in 1:1 stoichiometry. Plays a key role in maintening intracellular pH neutral and cell volume, and thus is important for cell growth, proliferation, migration and survival. In addition, can transport lithium Li(+) and also functions as a Na(+)/Li(+) antiporter. SLC9A1 also functions in membrane anchoring and organization of scaffolding complexes that coordinate signaling inputs. The sequence is that of Sodium/hydrogen exchanger 1 (Slc9a1) from Rattus norvegicus (Rat).